A 401-amino-acid polypeptide reads, in one-letter code: Serine--glyoxylate aminotransferase (401 aa).

Met-1 carries the N-acetylmethionine modification. Pyridoxal 5'-phosphate-binding positions include 68–70 (TGT), Thr-148, and 200–201 (QK). Position 201 (Lys-201) interacts with 3-hydroxypyruvate. Lys-201 carries the post-translational modification N6-(pyridoxal phosphate)lysine. Ser-204 is subject to Phosphoserine. Position 347 (Arg-347) interacts with 3-hydroxypyruvate. The Microbody targeting signal motif lies at 399-401 (SRI).

It belongs to the class-V pyridoxal-phosphate-dependent aminotransferase family. In terms of assembly, forms homodimers. Interacts with RABGAP22. Pyridoxal 5'-phosphate serves as cofactor. In terms of tissue distribution, widely expressed. Preferentially expressed in green, leafy tissues, root cortex and epidermis, developing siliques and dry seeds.

The protein resides in the peroxisome. It catalyses the reaction glyoxylate + L-serine = 3-hydroxypyruvate + glycine. The catalysed reaction is glyoxylate + L-alanine = glycine + pyruvate. It carries out the reaction L-serine + pyruvate = 3-hydroxypyruvate + L-alanine. The enzyme catalyses 3-hydroxypyruvate + L-asparagine = 2-oxosuccinamate + L-serine. It catalyses the reaction L-asparagine + glyoxylate = 2-oxosuccinamate + glycine. The catalysed reaction is L-asparagine + pyruvate = 2-oxosuccinamate + L-alanine. Its activity is regulated as follows. Inhibited by aminooxyacetate and beta-chloro-L-alanine, but not by p-hydroxymercuribenzoate. In terms of biological role, photorespiratory enzyme that catalyzes transamination reactions with multiple substrates, including asparagine. Functions exclusively as a catabolic enzyme in Asn metabolism. Involved in root development during seedling establishment after seed germination by regulating serine homeostasis and acetate conversion. The polypeptide is Serine--glyoxylate aminotransferase (Arabidopsis thaliana (Mouse-ear cress)).